Reading from the N-terminus, the 208-residue chain is Elongation factor Ts, chloroplastic (208 aa).

The protein belongs to the EF-Ts family.

It localises to the plastid. The protein localises to the chloroplast. Associates with the EF-Tu.GDP complex and induces the exchange of GDP to GTP. It remains bound to the aminoacyl-tRNA.EF-Tu.GTP complex up to the GTP hydrolysis stage on the ribosome. In Cyanidium caldarium (Red alga), this protein is Elongation factor Ts, chloroplastic (tsf).